We begin with the raw amino-acid sequence, 449 residues long: FAD-linked oxidoreductase janO (449 aa).

The 172-residue stretch at P32–L203 folds into the FAD-binding PCMH-type domain.

The protein belongs to the oxygen-dependent FAD-linked oxidoreductase family. The cofactor is FAD.

The protein operates within secondary metabolite biosynthesis. In terms of biological role, FAD-linked oxidoreductase; part of the gene cluster that mediates the biosynthesis of the indole diterpenes janthitremanes such as shearinine K or shearinine A. The geranylgeranyl diphosphate (GGPP) synthase janG catalyzes the first step in janthitremane biosynthesis via conversion of farnesyl pyrophosphate and isopentyl pyrophosphate into geranylgeranyl pyrophosphate (GGPP). Condensation of indole-3-glycerol phosphate with GGPP by the prenyl transferase janC then forms 3-geranylgeranylindole (3-GGI). Epoxidation by the FAD-dependent monooxygenase janM leads to a epoxidized-GGI that is substrate of the terpene cyclase janB for cyclization to yield paspaline. Paspaline is subsequently converted to 13-desoxypaspaline by the cytochrome P450 monooxygenase janP, via beta-PC-M6 in a series of alpha-face oxidations. The cytochrome P450 monooxygenase janQ is proposed to carry out sequential beta-face oxidation steps at C-7 and C-13 of 13-desoxypaspaline to form paspalicine and paspalinine respectively. The indole diterpene prenyltransferase janD may then convert paspalinine into shearinine K which is substrate of janO and/or additional enzymes for oxidation and cyclization to generate shearinine A. The chain is FAD-linked oxidoreductase janO from Penicillium janthinellum (Penicillium vitale).